A 511-amino-acid chain; its full sequence is Cysteine--tRNA ligase 2, cytoplasmic (511 aa).

Cys34 contributes to the Zn(2+) binding site. Positions 36 to 46 (ITAYDFSHIGH) match the 'HIGH' region motif. The Zn(2+) site is built by Cys214, His239, and Glu243. The 'KMSKS' region signature appears at 271–275 (KMAKS). Lys274 lines the ATP pocket. TPR repeat units lie at residues 315 to 348 (ESSSEALYYVYQTLQDLDEGLSPYQDALSEDGGK) and 368 to 401 (SKMLDDLNTAHILTGAYQDALKFINASLSKLKKM).

It belongs to the class-I aminoacyl-tRNA synthetase family. Requires Zn(2+) as cofactor.

It localises to the cytoplasm. It is found in the cytosol. It catalyses the reaction tRNA(Cys) + L-cysteine + ATP = L-cysteinyl-tRNA(Cys) + AMP + diphosphate. This is Cysteine--tRNA ligase 2, cytoplasmic from Arabidopsis thaliana (Mouse-ear cress).